The primary structure comprises 331 residues: DSC E3 ubiquitin ligase complex subunit D (331 aa).

The N-linked (GlcNAc...) asparagine glycan is linked to asparagine 26. 3 consecutive transmembrane segments (helical) span residues 63–83, 107–127, and 159–179; these read ILIYCELSALYYMDCSVILFA, PFIGAIFVSNIFCMIFHNFFT, and LFLLDFLVLILDLVMLGLIVE. Residues 197-214 show a composition bias toward basic and acidic residues; the sequence is VQDHDSEERGVHRTRPES. A disordered region spans residues 197-225; that stretch reads VQDHDSEERGVHRTRPESRSSVVGAELDE.

In terms of assembly, component of the DSC E3 ubiquitin ligase complex composed of dscA, dscB, dscC and dscD.

It localises to the endoplasmic reticulum membrane. It functions in the pathway protein modification; protein ubiquitination. Functionally, component of the DSC E3 ubiquitin ligase complex which is required for the srbA transcriptional activator proteolytic cleavage to release the soluble transcription factor from the membrane in low oxygen or sterol conditions. Required for growth during hypoxia and triazole drug susceptibility, as well as for virulence in a murine model of invasive pulmonary aspergillosis (IPA). This is DSC E3 ubiquitin ligase complex subunit D from Aspergillus fumigatus (strain CBS 144.89 / FGSC A1163 / CEA10) (Neosartorya fumigata).